We begin with the raw amino-acid sequence, 718 residues long: Acetolactate synthase, mitochondrial (718 aa).

Disordered stretches follow at residues 1-53 and 75-99; these read MLTR…YDTP and QSSA…QAAP. The segment covering 32–45 has biased composition (polar residues); that stretch reads RYSNNIHTSSTQNA. Low complexity predominate over residues 76-99; it reads SSASTAAASPAVRPQPAQHFQAAP. Glu173 is a thiamine diphosphate binding site. Arg275 lines the FAD pocket. The disordered stretch occupies residues 301 to 326; the sequence is VQPGHSPYLPSNPLNPSSQPSDPLPG. Residues 306-325 are compositionally biased toward low complexity; the sequence is SPYLPSNPLNPSSQPSDPLP. Residues 397 to 418 and 449 to 468 contribute to the FAD site; these read HGSA…LGVR and EIQP…VLGD. Residues 541–621 form a thiamine pyrophosphate binding region; sequence QHQMWACQYY…VKVLLFNNEF (81 aa). 2 residues coordinate Mg(2+): Asp592 and Asn619.

This sequence belongs to the TPP enzyme family. Mg(2+) is required as a cofactor. Thiamine diphosphate serves as cofactor.

The protein resides in the mitochondrion. It catalyses the reaction 2 pyruvate + H(+) = (2S)-2-acetolactate + CO2. The protein operates within amino-acid biosynthesis; L-isoleucine biosynthesis; L-isoleucine from 2-oxobutanoate: step 1/4. It functions in the pathway amino-acid biosynthesis; L-valine biosynthesis; L-valine from pyruvate: step 1/4. This chain is Acetolactate synthase, mitochondrial (ILV2), found in Cryptococcus neoformans var. grubii serotype A (strain H99 / ATCC 208821 / CBS 10515 / FGSC 9487) (Filobasidiella neoformans var. grubii).